Reading from the N-terminus, the 60-residue chain is Small ribosomal subunit protein bS21 (60 aa).

The interval 41 to 60 is disordered; that stretch reads PEEKRKRKAIARRRQRSRRR. The span at 45 to 60 shows a compositional bias: basic residues; sequence RKRKAIARRRQRSRRR.

This sequence belongs to the bacterial ribosomal protein bS21 family.

The chain is Small ribosomal subunit protein bS21 from Gloeothece citriformis (strain PCC 7424) (Cyanothece sp. (strain PCC 7424)).